Here is a 665-residue protein sequence, read N- to C-terminus: RNA-directed RNA polymerase (665 aa).

It carries out the reaction RNA(n) + a ribonucleoside 5'-triphosphate = RNA(n+1) + diphosphate. Functionally, RNA-dependent RNA polymerase which replicates the viral genome. The sequence is that of RNA-directed RNA polymerase from Atkinsonella hypoxylon (AhV).